The following is a 609-amino-acid chain: UvrABC system protein C (609 aa).

The GIY-YIG domain occupies 16-94; the sequence is SSPGVYRMYD…IKQYMPKYNV (79 aa). The UVR domain occupies 203–238; the sequence is HQVMSVLVGKMEQAASDMRYEQAALYRDQITALRRV.

It belongs to the UvrC family. Interacts with UvrB in an incision complex.

It localises to the cytoplasm. In terms of biological role, the UvrABC repair system catalyzes the recognition and processing of DNA lesions. UvrC both incises the 5' and 3' sides of the lesion. The N-terminal half is responsible for the 3' incision and the C-terminal half is responsible for the 5' incision. The sequence is that of UvrABC system protein C from Shewanella halifaxensis (strain HAW-EB4).